A 252-amino-acid polypeptide reads, in one-letter code: Triosephosphate isomerase (252 aa).

10 to 12 lines the substrate pocket; it reads NWK. Histidine 96 serves as the catalytic Electrophile. Catalysis depends on glutamate 168, which acts as the Proton acceptor. Residues glycine 174, serine 214, and 235–236 each bind substrate; that span reads GG.

It belongs to the triosephosphate isomerase family. As to quaternary structure, homodimer.

It is found in the cytoplasm. It carries out the reaction D-glyceraldehyde 3-phosphate = dihydroxyacetone phosphate. It participates in carbohydrate biosynthesis; gluconeogenesis. Its pathway is carbohydrate degradation; glycolysis; D-glyceraldehyde 3-phosphate from glycerone phosphate: step 1/1. Its function is as follows. Involved in the gluconeogenesis. Catalyzes stereospecifically the conversion of dihydroxyacetone phosphate (DHAP) to D-glyceraldehyde-3-phosphate (G3P). This is Triosephosphate isomerase from Streptococcus equi subsp. zooepidemicus (strain MGCS10565).